The sequence spans 755 residues: Xaa-Pro dipeptidyl-peptidase (755 aa).

Residues Ser348, Asp468, and His498 each act as charge relay system in the active site.

Belongs to the peptidase S15 family. As to quaternary structure, homodimer.

It localises to the cytoplasm. It catalyses the reaction Hydrolyzes Xaa-Pro-|- bonds to release unblocked, N-terminal dipeptides from substrates including Ala-Pro-|-p-nitroanilide and (sequentially) Tyr-Pro-|-Phe-Pro-|-Gly-Pro-|-Ile.. Functionally, removes N-terminal dipeptides sequentially from polypeptides having unsubstituted N-termini provided that the penultimate residue is proline. The chain is Xaa-Pro dipeptidyl-peptidase from Streptococcus thermophilus.